A 278-amino-acid chain; its full sequence is MAAASSRSFSLCVLLLLLLLAPPISASFLFDGGKSKSAAAAAAVDMEWRPATATWYGDAEGDGSTGGACGYGSLVDVVPMKARVGSVSPVLFKDGEGCGACYKVKCLDHGICSRRAVTVIVTDECPGGLCAFGRTHFDLSGAAFSRMAVAGAGGHLRDRGQLSVVYRRTACKYGGKNIAFRVNEGSTNFWLSLLVEFEDGQGDIGSMQIKQANSVEWLDMKHVWGATWCLVRGPLVGPFSVRLTTLSAQKALTARDVIPRNWKPTATYTSRLNFEAAL.

A signal peptide spans 1 to 26; sequence MAAASSRSFSLCVLLLLLLLAPPISA. The 111-residue stretch at 66–176 folds into the Expansin-like EG45 domain; it reads GGACGYGSLV…RRTACKYGGK (111 aa). Disulfide bonds link Cys-69/Cys-98, Cys-101/Cys-171, and Cys-106/Cys-112. Residues 189–270 enclose the Expansin-like CBD domain; the sequence is FWLSLLVEFE…NWKPTATYTS (82 aa).

Belongs to the expansin family. Expansin B subfamily.

Its subcellular location is the secreted. It is found in the cell wall. The protein localises to the membrane. May cause loosening and extension of plant cell walls by disrupting non-covalent bonding between cellulose microfibrils and matrix glucans. No enzymatic activity has been found. May be required for rapid internodal elongation in deepwater rice during submergence. The polypeptide is Expansin-B17 (EXPB17) (Oryza sativa subsp. japonica (Rice)).